The following is a 328-amino-acid chain: Protein URE2 (328 aa).

Positions 1–14 (MNMSDQRIPQNTGD) are enriched in polar residues. Positions 1–35 (MNMSDQRIPQNTGDNSNNSNSNNNNNNNNNTHTIS) are disordered. The span at 15 to 30 (NSNNSNSNNNNNNNNN) shows a compositional bias: low complexity. Residues 86–170 (EGYTLFSHRS…YLVSKYLKEN (85 aa)) enclose the GST N-terminal domain. The 150-residue stretch at 179-328 (NLIEQSQISS…PAVIRALRGD (150 aa)) folds into the GST C-terminal domain.

Belongs to the GST superfamily. In terms of assembly, homodimer.

Functionally, plays an important role in the cellular response to the nitrogen source. URE2 gene plays a major part in the repression of GLN1 and GDH2 genes by glutamine, and is required for the inactivation of glutamine synthetase. URE2 gene product may catalytically inactivate GLN3 in response to an increase in the intracellular concentration of glutamine. The polypeptide is Protein URE2 (URE2) (Candida maltosa (Yeast)).